The sequence spans 115 residues: Ribonuclease P protein component (115 aa).

Belongs to the RnpA family. In terms of assembly, consists of a catalytic RNA component (M1 or rnpB) and a protein subunit.

It carries out the reaction Endonucleolytic cleavage of RNA, removing 5'-extranucleotides from tRNA precursor.. Its function is as follows. RNaseP catalyzes the removal of the 5'-leader sequence from pre-tRNA to produce the mature 5'-terminus. It can also cleave other RNA substrates such as 4.5S RNA. The protein component plays an auxiliary but essential role in vivo by binding to the 5'-leader sequence and broadening the substrate specificity of the ribozyme. The protein is Ribonuclease P protein component of Blochmanniella pennsylvanica (strain BPEN).